A 169-amino-acid chain; its full sequence is 3-hydroxyacyl-[acyl-carrier-protein] dehydratase FabZ (169 aa).

Histidine 74 is an active-site residue.

It belongs to the thioester dehydratase family. FabZ subfamily.

It localises to the cytoplasm. It catalyses the reaction a (3R)-hydroxyacyl-[ACP] = a (2E)-enoyl-[ACP] + H2O. Involved in unsaturated fatty acids biosynthesis. Catalyzes the dehydration of short chain beta-hydroxyacyl-ACPs and long chain saturated and unsaturated beta-hydroxyacyl-ACPs. In Gluconobacter oxydans (strain 621H) (Gluconobacter suboxydans), this protein is 3-hydroxyacyl-[acyl-carrier-protein] dehydratase FabZ.